The following is a 1205-amino-acid chain: cGMP-specific 3',5'-cyclic phosphodiesterase (1205 aa).

Residues 1–153 are disordered; it reads MTDVSSPAGG…TKASTTASQQ (153 aa). Positions 18–32 are enriched in low complexity; it reads TTSSSPAATTSASSS. Residues 33-48 show a composition bias toward polar residues; sequence KPLTNGANKTTISTTA. Residues 62-71 are compositionally biased toward low complexity; that stretch reads GAIPASSSSG. Residues 83–94 are compositionally biased toward polar residues; it reads SNNNRPAATNRS. The span at 118 to 140 shows a compositional bias: low complexity; the sequence is SSSSPSQSPSQTQASIQTQTSQQ. GAF domains lie at 259-411 and 443-624; these read DIDV…GIGI and NLEC…GLGI. In terms of domain architecture, PDEase spans 654-1052; sequence SQDQTEKLTQ…RNWQDLAEKV (399 aa). His-730 functions as the Proton donor in the catalytic mechanism. A divalent metal cation is bound by residues His-734, His-770, Asp-771, and Asp-956. 2 disordered regions span residues 1093–1122 and 1152–1205; these read QQSQ…TGAL and SHVS…CALL. Composition is skewed to basic and acidic residues over residues 1098-1109 and 1152-1162; these read GSEDSHTPEHQR and SHVSEDMDDKS. Residues 1171 to 1191 show a composition bias toward low complexity; it reads ASGSMGRMSASSSTSSAGGQM. Basic residues predominate over residues 1195–1205; sequence SKKRSKLCALL. Residue Cys-1202 is modified to Cysteine methyl ester. The S-farnesyl cysteine moiety is linked to residue Cys-1202. Positions 1203 to 1205 are cleaved as a propeptide — removed in mature form; that stretch reads ALL.

This sequence belongs to the cyclic nucleotide phosphodiesterase family. Interacts with PrBP. The cofactor is a divalent metal cation.

The protein resides in the cell membrane. It catalyses the reaction 3',5'-cyclic GMP + H2O = GMP + H(+). In terms of biological role, has a role regulating cGMP transport in Malpighian tubule principal cells. This chain is cGMP-specific 3',5'-cyclic phosphodiesterase, found in Drosophila sechellia (Fruit fly).